Reading from the N-terminus, the 889-residue chain is Translation initiation factor IF-2 (889 aa).

Residues 115 to 236 (EAEAQAKAEA…EAERYSDHHI (122 aa)) show a composition bias toward basic and acidic residues. Residues 115–293 (EAEAQAKAEA…RNRSTAPESM (179 aa)) are disordered. Over residues 257 to 270 (GRRARNKNTAKTKR) the composition is skewed to basic residues. Residues 271–280 (GGKDARDGRE) are compositionally biased toward basic and acidic residues. The 170-residue stretch at 389 to 558 (PRAPVVTIMG…LLQAEVLELK (170 aa)) folds into the tr-type G domain. A G1 region spans residues 398–405 (GHVDHGKT). 398-405 (GHVDHGKT) contributes to the GTP binding site. A G2 region spans residues 423 to 427 (GITQH). The tract at residues 444–447 (DTPG) is G3. GTP-binding positions include 444-448 (DTPGH) and 498-501 (NKMD). Positions 498–501 (NKMD) are G4. The interval 534–536 (SAK) is G5.

This sequence belongs to the TRAFAC class translation factor GTPase superfamily. Classic translation factor GTPase family. IF-2 subfamily.

It is found in the cytoplasm. One of the essential components for the initiation of protein synthesis. Protects formylmethionyl-tRNA from spontaneous hydrolysis and promotes its binding to the 30S ribosomal subunits. Also involved in the hydrolysis of GTP during the formation of the 70S ribosomal complex. This is Translation initiation factor IF-2 from Shewanella sp. (strain ANA-3).